Reading from the N-terminus, the 481-residue chain is Aspartyl/glutamyl-tRNA(Asn/Gln) amidotransferase subunit B (481 aa).

It belongs to the GatB/GatE family. GatB subfamily. As to quaternary structure, heterotrimer of A, B and C subunits.

It catalyses the reaction L-glutamyl-tRNA(Gln) + L-glutamine + ATP + H2O = L-glutaminyl-tRNA(Gln) + L-glutamate + ADP + phosphate + H(+). It carries out the reaction L-aspartyl-tRNA(Asn) + L-glutamine + ATP + H2O = L-asparaginyl-tRNA(Asn) + L-glutamate + ADP + phosphate + 2 H(+). Functionally, allows the formation of correctly charged Asn-tRNA(Asn) or Gln-tRNA(Gln) through the transamidation of misacylated Asp-tRNA(Asn) or Glu-tRNA(Gln) in organisms which lack either or both of asparaginyl-tRNA or glutaminyl-tRNA synthetases. The reaction takes place in the presence of glutamine and ATP through an activated phospho-Asp-tRNA(Asn) or phospho-Glu-tRNA(Gln). The chain is Aspartyl/glutamyl-tRNA(Asn/Gln) amidotransferase subunit B from Fusobacterium nucleatum subsp. nucleatum (strain ATCC 25586 / DSM 15643 / BCRC 10681 / CIP 101130 / JCM 8532 / KCTC 2640 / LMG 13131 / VPI 4355).